A 373-amino-acid polypeptide reads, in one-letter code: Alpha-N-acetylgalactosaminide alpha-2,6-sialyltransferase 2 (373 aa).

The Cytoplasmic portion of the chain corresponds to 1 to 6; the sequence is MDLPRR. Residues 7–27 form a helical; Signal-anchor for type II membrane protein membrane-spanning segment; it reads WLFRMLLLVATSSGILLMLYS. Residues 28-373 are Lumenal-facing; the sequence is SAGQQSPETQ…NAGILWLYQR (346 aa). 2 disulfide bridges follow: cysteine 65–cysteine 147 and cysteine 150–cysteine 316. N-linked (GlcNAc...) asparagine glycosylation is present at asparagine 103. Asparagine 155 contributes to the CMP-N-acetyl-beta-neuraminate binding site. Asparagine 160 is a glycosylation site (N-linked (GlcNAc...) asparagine). CMP-N-acetyl-beta-neuraminate is bound by residues asparagine 178, serine 303, and histidine 335.

Belongs to the glycosyltransferase 29 family. In terms of tissue distribution, highly expressed in lactating mammary gland and adult testis. Lower levels in kidney.

The protein resides in the golgi apparatus membrane. The enzyme catalyses a beta-D-galactosyl-(1-&gt;3)-N-acetyl-alpha-D-galactosaminyl derivative + CMP-N-acetyl-beta-neuraminate = a beta-D-galactosyl-(1-&gt;3)-[N-acetyl-alpha-neuraminyl-(2-&gt;6)]-N-acetyl-alpha-D-galactosaminyl derivative + CMP + H(+). It catalyses the reaction a 3-O-[N-acetyl-alpha-D-galactosaminyl]-L-threonyl-[protein] + CMP-N-acetyl-beta-neuraminate = a 3-O-[N-acetyl-alpha-neuraminosyl-(2-&gt;6)-N-acetyl-alpha-D-galactosaminyl]-L-threonyl-[protein] + CMP + H(+). It carries out the reaction a 3-O-[N-acetyl-alpha-neuraminyl-(2-&gt;3)-beta-D-galactosyl-(1-&gt;3)-N-acetyl-alpha-D-galactosaminyl]-L-threonyl-[protein] + CMP-N-acetyl-beta-neuraminate = a 3-O-{alpha-Neu5Ac-(2-&gt;3)-beta-D-Gal-(1-&gt;3)-[alpha-Neu5Ac-(2-&gt;6)]-alpha-D-GalNAc}-L-threonyl-[protein] + CMP + H(+). The protein operates within protein modification; protein glycosylation. Functionally, catalyzes the transfer of N-acetylneuraminyl groups onto glycan chains in glycoproteins. Conjugates sialic acid with an alpha-2-6 linkage to N-acetylgalactosamine (GalNAc) glycan chains linked to serine or threonine in glycoproteins. Sialylates alphaGalNAc- and Galbeta1-&gt;3GalNAc-O-Ser/Thr epitopes also known as Tn and T antigens. This chain is Alpha-N-acetylgalactosaminide alpha-2,6-sialyltransferase 2 (St6galnac2), found in Mus musculus (Mouse).